Reading from the N-terminus, the 380-residue chain is DNA replication and repair protein RecF (380 aa).

30-37 (GQNGQGKT) contributes to the ATP binding site.

It belongs to the RecF family.

The protein resides in the cytoplasm. Its function is as follows. The RecF protein is involved in DNA metabolism; it is required for DNA replication and normal SOS inducibility. RecF binds preferentially to single-stranded, linear DNA. It also seems to bind ATP. This Myxococcus xanthus (strain DK1622) protein is DNA replication and repair protein RecF.